Reading from the N-terminus, the 463-residue chain is MGFLKLSPMILLLAMIGVSYAMDMSIISYDENHHITTETSRSDSEVERIYEAWMVEHGKKKMNQNGLGAEKDQRFEIFKDNLRFIDEHNTKNLSYKLGLTRFADLTNEEYRSMYLGAKPTKRVLKTSDRYQARVGDALPDSVDWRKEGAVADVKDQGSCGSCWAFSTIGAVEGINKIVTGDLISLSEQELVDCDTSYNQGCNGGLMDYAFEFIIKNGGIDTEADYPYKAADGRCDQNRKNAKVVTIDSYEDVPENSEASLKKALAHQPISVAIEAGGRAFQLYSSGVFDGLCGTELDHGVVAVGYGTENGKDYWIVRNSWGNRWGESGYIKMARNIEAPTGKCGIAMEASYPIKKGQNPPNPGPSPPSPIKPPTTCDKYFSCPESNTCCCLYKYGKYCFGWGCCPLEAATCCDDNSSCCPHEYPVCDVNRGTCLMSKNSPFSVKALKRTPAIPFWAKSRKHIA.

The signal sequence occupies residues 1–21 (MGFLKLSPMILLLAMIGVSYA). Positions 22–137 (MDMSIISYDE…DRYQARVGDA (116 aa)) are cleaved as a propeptide — activation peptide. N92 carries an N-linked (GlcNAc...) asparagine glycan. Disulfide bonds link C159–C201, C193–C234, C292–C343, C376–C388, and C382–C403. C162 is a catalytic residue. Active-site residues include H298 and N318. The propeptide at 354 to 463 (KKGQNPPNPG…FWAKSRKHIA (110 aa)) is removed in mature form. Residue N415 is glycosylated (N-linked (GlcNAc...) asparagine).

It belongs to the peptidase C1 family. As to quaternary structure, interacts with PRN2. Interacts with WSCP.

In terms of biological role, probable thiol protease. This chain is Probable cysteine protease RD21B, found in Arabidopsis thaliana (Mouse-ear cress).